The primary structure comprises 63 residues: Large ribosomal subunit protein uL29 (63 aa).

The protein belongs to the universal ribosomal protein uL29 family.

The polypeptide is Large ribosomal subunit protein uL29 (Ectopseudomonas mendocina (strain ymp) (Pseudomonas mendocina)).